The sequence spans 138 residues: 1,4-dihydroxy-2-naphthoyl-CoA hydrolase (138 aa).

Asp15 is an active-site residue.

Belongs to the 4-hydroxybenzoyl-CoA thioesterase family. DHNA-CoA hydrolase subfamily.

The enzyme catalyses 1,4-dihydroxy-2-naphthoyl-CoA + H2O = 1,4-dihydroxy-2-naphthoate + CoA + H(+). The protein operates within cofactor biosynthesis; phylloquinone biosynthesis. It functions in the pathway quinol/quinone metabolism; 1,4-dihydroxy-2-naphthoate biosynthesis; 1,4-dihydroxy-2-naphthoate from chorismate: step 7/7. Catalyzes the hydrolysis of 1,4-dihydroxy-2-naphthoyl-CoA (DHNA-CoA) to 1,4-dihydroxy-2-naphthoate (DHNA), a reaction involved in phylloquinone (vitamin K1) biosynthesis. The chain is 1,4-dihydroxy-2-naphthoyl-CoA hydrolase from Trichodesmium erythraeum (strain IMS101).